A 533-amino-acid polypeptide reads, in one-letter code: E3 ubiquitin-protein ligase arih1l (533 aa).

Disordered stretches follow at residues 1-35 (MDSDEGYNYEFDDEEEEEEEEEECSVDSGEEEAVD) and 48-73 (PAVAGGEPDDCADTGGGGPGPGQEDE). A TRIAD supradomain region spans residues 158-369 (QDLPCQICYL…SAWYNCNRYN (212 aa)). Residues Cys162, Cys165, Cys179, His181, Cys184, Cys187, Cys207, Cys212, Cys252, Cys257, Cys273, Cys275, Cys280, Cys283, His288, Cys293, Cys320, and Cys323 each contribute to the Zn(2+) site. An RING-type 1 zinc finger spans residues 162–212 (CQICYLNYPNSYFTGLECGHKFCMQCWGDYLTTKIIEEGMGQTISCPAHNC). Residues 232-293 (LKYQHLITNS…GENWHDPVKC (62 aa)) form an IBR-type zinc finger. The segment at 320-351 (CPKCHVTIEKDGGCNHMVCRNQNCKAEFCWVC) adopts an RING-type 2; atypical zinc-finger fold. Cys333 is a catalytic residue. Positions 338, 343, 348, 351, 358, and 365 each coordinate Zn(2+). Residues 409–425 (KLYAQVKQKMEEMQQHN) are a coiled coil.

It belongs to the RBR family. Ariadne subfamily.

It is found in the cytoplasm. It catalyses the reaction [E2 ubiquitin-conjugating enzyme]-S-ubiquitinyl-L-cysteine + [acceptor protein]-L-lysine = [E2 ubiquitin-conjugating enzyme]-L-cysteine + [acceptor protein]-N(6)-ubiquitinyl-L-lysine.. Its pathway is protein modification; protein ubiquitination. Functionally, E3 ubiquitin-protein ligase, which catalyzes polyubiquitination of target proteins together with ubiquitin-conjugating enzyme E2 ube2l3. This Danio rerio (Zebrafish) protein is E3 ubiquitin-protein ligase arih1l (arih1l).